Here is a 203-residue protein sequence, read N- to C-terminus: EF-hand calcium-binding domain-containing protein 8 (203 aa).

The segment at S61–Q107 is disordered. Positions R87 to Q107 are enriched in polar residues. EF-hand domains follow at residues M111–S145 and M146–G181.

This Mus musculus (Mouse) protein is EF-hand calcium-binding domain-containing protein 8 (Efcab8).